The sequence spans 459 residues: mRNA-capping enzyme subunit alpha (459 aa).

Catalysis depends on Lys-70, which acts as the N6-GMP-lysine intermediate. The interval 415–459 (MAGGSGRPLPSQSQNATLSTSKPVHSQPPSNDKEPKYVDEDDWSD) is disordered. The span at 424–444 (PSQSQNATLSTSKPVHSQPPS) shows a compositional bias: polar residues.

The protein belongs to the eukaryotic GTase family. Heterodimer. The mRNA-capping enzyme is composed of two separate chains alpha and beta, respectively a mRNA guanylyltransferase and an mRNA 5'-triphosphate monophosphatase.

It localises to the nucleus. It catalyses the reaction a 5'-end diphospho-ribonucleoside in mRNA + GTP + H(+) = a 5'-end (5'-triphosphoguanosine)-ribonucleoside in mRNA + diphosphate. In terms of biological role, second step of mRNA capping. Transfer of the GMP moiety of GTP to the 5'-diphosphate terminus of RNA via a covalent enzyme-GMP reaction intermediate. This is mRNA-capping enzyme subunit alpha (CEG1) from Saccharomyces cerevisiae (strain ATCC 204508 / S288c) (Baker's yeast).